A 479-amino-acid chain; its full sequence is Aspartyl/glutamyl-tRNA(Asn/Gln) amidotransferase subunit B (479 aa).

It belongs to the GatB/GatE family. GatB subfamily. As to quaternary structure, heterotrimer of A, B and C subunits.

The catalysed reaction is L-glutamyl-tRNA(Gln) + L-glutamine + ATP + H2O = L-glutaminyl-tRNA(Gln) + L-glutamate + ADP + phosphate + H(+). The enzyme catalyses L-aspartyl-tRNA(Asn) + L-glutamine + ATP + H2O = L-asparaginyl-tRNA(Asn) + L-glutamate + ADP + phosphate + 2 H(+). Allows the formation of correctly charged Asn-tRNA(Asn) or Gln-tRNA(Gln) through the transamidation of misacylated Asp-tRNA(Asn) or Glu-tRNA(Gln) in organisms which lack either or both of asparaginyl-tRNA or glutaminyl-tRNA synthetases. The reaction takes place in the presence of glutamine and ATP through an activated phospho-Asp-tRNA(Asn) or phospho-Glu-tRNA(Gln). This is Aspartyl/glutamyl-tRNA(Asn/Gln) amidotransferase subunit B from Alcanivorax borkumensis (strain ATCC 700651 / DSM 11573 / NCIMB 13689 / SK2).